Here is a 568-residue protein sequence, read N- to C-terminus: CTP synthase (568 aa).

The interval 1–276 (MPQARTIKHV…DAYLVRRLGL (276 aa)) is amidoligase domain. Ser-18 is a binding site for CTP. Residue Ser-18 participates in UTP binding. ATP is bound by residues 19-24 (SLGKGL) and Asp-76. Mg(2+)-binding residues include Asp-76 and Glu-150. CTP is bound by residues 157–159 (DIE), 197–202 (KTKPTQ), and Lys-233. UTP is bound by residues 197 to 202 (KTKPTQ) and Lys-233. The region spanning 301-550 (RIALVGKYVD…VNAALEYRAA (250 aa)) is the Glutamine amidotransferase type-1 domain. Gly-364 provides a ligand contact to L-glutamine. The Nucleophile; for glutamine hydrolysis role is filled by Cys-391. Residues 392 to 395 (LGLQ), Glu-415, and Arg-476 each bind L-glutamine. Residues His-523 and Glu-525 contribute to the active site.

Belongs to the CTP synthase family. In terms of assembly, homotetramer.

The catalysed reaction is UTP + L-glutamine + ATP + H2O = CTP + L-glutamate + ADP + phosphate + 2 H(+). It catalyses the reaction L-glutamine + H2O = L-glutamate + NH4(+). It carries out the reaction UTP + NH4(+) + ATP = CTP + ADP + phosphate + 2 H(+). Its pathway is pyrimidine metabolism; CTP biosynthesis via de novo pathway; CTP from UDP: step 2/2. Its activity is regulated as follows. Allosterically activated by GTP, when glutamine is the substrate; GTP has no effect on the reaction when ammonia is the substrate. The allosteric effector GTP functions by stabilizing the protein conformation that binds the tetrahedral intermediate(s) formed during glutamine hydrolysis. Inhibited by the product CTP, via allosteric rather than competitive inhibition. In terms of biological role, catalyzes the ATP-dependent amination of UTP to CTP with either L-glutamine or ammonia as the source of nitrogen. Regulates intracellular CTP levels through interactions with the four ribonucleotide triphosphates. In Saccharopolyspora erythraea (strain ATCC 11635 / DSM 40517 / JCM 4748 / NBRC 13426 / NCIMB 8594 / NRRL 2338), this protein is CTP synthase.